The following is a 781-amino-acid chain: Cation channel sperm-associated auxiliary subunit delta (781 aa).

Residues 1–20 (MLVLMLVVATTFRLCPLVKA) form the signal peptide. The Extracellular portion of the chain corresponds to 21–725 (RPLCRIRTLR…YGAFPLSIFP (705 aa)). 7 cysteine pairs are disulfide-bonded: Cys-24/Cys-370, Cys-60/Cys-146, Cys-145/Cys-153, Cys-388/Cys-497, Cys-511/Cys-705, Cys-526/Cys-573, and Cys-625/Cys-655. N-linked (GlcNAc...) asparagine glycosylation is found at Asn-231, Asn-294, Asn-458, Asn-473, Asn-539, and Asn-631. A helical membrane pass occupies residues 726 to 749 (PEITIVLLTAATLLSIWLAYMIPQ). Residues 750-781 (LLHTEQGLEGNGFWVRLYQRCRKSCACLWGRC) lie on the Cytoplasmic side of the membrane.

It belongs to the CATSPERD family. As to quaternary structure, component of the CatSper complex or CatSpermasome composed of the core pore-forming members CATSPER1, CATSPER2, CATSPER3 and CATSPER4 as well as auxiliary members CATSPERB, CATSPERG, CATSPERD, CATSPERE, CATSPERZ, C2CD6/CATSPERT, TMEM249, TMEM262 and EFCAB9. HSPA1 may be an additional auxiliary complex member. The core complex members CATSPER1, CATSPER2, CATSPER3 and CATSPER4 form a heterotetrameric channel. The auxiliary CATSPERB, CATSPERG, CATSPERD and CATSPERE subunits form a pavilion-like structure over the pore which stabilizes the complex through interactions with CATSPER4, CATSPER3, CATSPER1 and CATSPER2 respectively. TMEM262/CATSPERH interacts with CATSPERB, further stabilizing the complex. C2CD6/CATSPERT interacts at least with CATSPERD and is required for targeting the CatSper complex in the flagellar membrane.

The protein resides in the cell projection. It localises to the cilium. The protein localises to the flagellum membrane. Functionally, auxiliary component of the CatSper complex, a complex involved in sperm cell hyperactivation. Sperm cell hyperactivation is needed for sperm motility which is essential late in the preparation of sperm for fertilization. Required for CATSPER1 stability before intraflagellar transport and/or incorporation of the CatSper complex channel into the flagellar membrane. This is Cation channel sperm-associated auxiliary subunit delta from Bos taurus (Bovine).